The chain runs to 447 residues: tRNA modification GTPase MnmE (447 aa).

(6S)-5-formyl-5,6,7,8-tetrahydrofolate is bound by residues Arg24, Glu81, and Lys120. The 156-residue stretch at 216–371 (GLNVVIAGKP…LRKELSDIAG (156 aa)) folds into the TrmE-type G domain. A K(+)-binding site is contributed by Asn226. GTP-binding positions include 226–231 (NAGKSS), 245–251 (TDIAGTT), and 270–273 (DTAG). Ser230 lines the Mg(2+) pocket. Residues Thr245, Ile247, and Thr250 each contribute to the K(+) site. Thr251 is a Mg(2+) binding site. Lys447 serves as a coordination point for (6S)-5-formyl-5,6,7,8-tetrahydrofolate.

The protein belongs to the TRAFAC class TrmE-Era-EngA-EngB-Septin-like GTPase superfamily. TrmE GTPase family. In terms of assembly, homodimer. Heterotetramer of two MnmE and two MnmG subunits. K(+) serves as cofactor.

Its subcellular location is the cytoplasm. Functionally, exhibits a very high intrinsic GTPase hydrolysis rate. Involved in the addition of a carboxymethylaminomethyl (cmnm) group at the wobble position (U34) of certain tRNAs, forming tRNA-cmnm(5)s(2)U34. The protein is tRNA modification GTPase MnmE of Ruthia magnifica subsp. Calyptogena magnifica.